The sequence spans 425 residues: Polyadenylate-binding protein RBP47B' (425 aa).

3 consecutive RRM domains span residues 24-102 (RTLW…LNWA), 116-195 (HSIF…AATP), and 237-309 (TTIS…WSKN).

The protein belongs to the polyadenylate-binding RBP47 family. As to quaternary structure, interacts with the poly(A) tail of mRNA in nucleus.

The protein resides in the nucleus. It is found in the cytoplasmic granule. Its function is as follows. Heterogeneous nuclear ribonucleoprotein (hnRNP)-protein binding the poly(A) tail of mRNA and probably involved in some steps of pre-mRNA maturation. This is Polyadenylate-binding protein RBP47B' (RBP47B') from Arabidopsis thaliana (Mouse-ear cress).